A 469-amino-acid polypeptide reads, in one-letter code: ATP synthase subunit beta (469 aa).

155–162 (GGAGVGKT) is a binding site for ATP.

Belongs to the ATPase alpha/beta chains family. In terms of assembly, F-type ATPases have 2 components, CF(1) - the catalytic core - and CF(0) - the membrane proton channel. CF(1) has five subunits: alpha(3), beta(3), gamma(1), delta(1), epsilon(1). CF(0) has three main subunits: a(1), b(2) and c(9-12). The alpha and beta chains form an alternating ring which encloses part of the gamma chain. CF(1) is attached to CF(0) by a central stalk formed by the gamma and epsilon chains, while a peripheral stalk is formed by the delta and b chains.

The protein resides in the cell inner membrane. The enzyme catalyses ATP + H2O + 4 H(+)(in) = ADP + phosphate + 5 H(+)(out). Its function is as follows. Produces ATP from ADP in the presence of a proton gradient across the membrane. The catalytic sites are hosted primarily by the beta subunits. The chain is ATP synthase subunit beta from Syntrophobacter fumaroxidans (strain DSM 10017 / MPOB).